The chain runs to 353 residues: Photosystem II D2 protein (353 aa).

Thr2 carries the N-acetylthreonine modification. Position 2 is a phosphothreonine (Thr2). Residues 41 to 61 traverse the membrane as a helical segment; that stretch reads CAYFAVGGWFTGTTFVTSWYT. Chlorophyll a is bound at residue His118. Residues 125–141 traverse the membrane as a helical segment; it reads GFMLRQFELARSVQLRP. Positions 130 and 143 each coordinate pheophytin a. Residues 153–166 traverse the membrane as a helical segment; sequence VFVSVFLIYPLGQS. His198 lines the chlorophyll a pocket. The helical transmembrane segment at 208 to 228 threads the bilayer; sequence AALLCAIHGATVENTLFEDGD. A plastoquinone contacts are provided by His215 and Phe262. His215 is a Fe cation binding site. His269 contributes to the Fe cation binding site. The helical transmembrane segment at 279–295 threads the bilayer; sequence GLWMSALGVVGLALNLR.

It belongs to the reaction center PufL/M/PsbA/D family. As to quaternary structure, PSII is composed of 1 copy each of membrane proteins PsbA, PsbB, PsbC, PsbD, PsbE, PsbF, PsbH, PsbI, PsbJ, PsbK, PsbL, PsbM, PsbT, PsbX, PsbY, PsbZ, Psb30/Ycf12, at least 3 peripheral proteins of the oxygen-evolving complex and a large number of cofactors. It forms dimeric complexes. Requires The D1/D2 heterodimer binds P680, chlorophylls that are the primary electron donor of PSII, and subsequent electron acceptors. It shares a non-heme iron and each subunit binds pheophytin, quinone, additional chlorophylls, carotenoids and lipids. There is also a Cl(-1) ion associated with D1 and D2, which is required for oxygen evolution. The PSII complex binds additional chlorophylls, carotenoids and specific lipids. as cofactor.

Its subcellular location is the plastid. The protein resides in the chloroplast thylakoid membrane. The catalysed reaction is 2 a plastoquinone + 4 hnu + 2 H2O = 2 a plastoquinol + O2. Photosystem II (PSII) is a light-driven water:plastoquinone oxidoreductase that uses light energy to abstract electrons from H(2)O, generating O(2) and a proton gradient subsequently used for ATP formation. It consists of a core antenna complex that captures photons, and an electron transfer chain that converts photonic excitation into a charge separation. The D1/D2 (PsbA/PsbD) reaction center heterodimer binds P680, the primary electron donor of PSII as well as several subsequent electron acceptors. D2 is needed for assembly of a stable PSII complex. This is Photosystem II D2 protein from Atropa belladonna (Belladonna).